The following is a 391-amino-acid chain: O-methyltransferase ATR12 (391 aa).

S-adenosyl-L-methionine is bound by residues 233 to 234 (GG), D259, and 279 to 280 (DF). The Proton acceptor role is filled by H299.

The protein belongs to the class I-like SAM-binding methyltransferase superfamily. Cation-independent O-methyltransferase family. COMT subfamily.

It participates in mycotoxin biosynthesis. In terms of biological role, O-methyltransferase; part of the core atranone cluster (CAC) which products are predicted to catalyze most or all steps of mycotoxin atranone synthesis, starting from geranylgeranyl pyrophosphate (GGPP). The initial cyclization of GGPP to dolabellane is probably performed by the terpene cyclase ATR13. The Baeyer-Villiger oxidation near the end of the atranone synthesis, which converts atranones D and E to atranones F and G is predicted to be catalyzed by the monooxygenase ATR8. Of the CAC's other predicted gene products, the reducing PKS ATR6 might synthesize a polyketide chain. This polyketide is probably transferred onto the atranone backbone by the polyketide transferase ATR5. Other predicted CAC products include 4 oxygenases (ATR2, ATR3, ATR4, and ATR14), 3 short-chain reductases (ATR7, ATR9, and ATR10), and a methyltransferase (ATR12). These may all be involved in the various steps of atranone biosynthesis, although their specific roles must await experimental determination. This is O-methyltransferase ATR12 from Stachybotrys chlorohalonatus (strain IBT 40285).